A 201-amino-acid polypeptide reads, in one-letter code: Myelomonocytic growth factor (201 aa).

Positions 1 to 23 are cleaved as a signal peptide; sequence MCCLTPVLALALVLGAPWQALHG. 2 disulfides stabilise this stretch: Cys-61-Cys-67 and Cys-89-Cys-99. Residues Asn-123 and Asn-137 are each glycosylated (N-linked (GlcNAc...) asparagine).

The protein belongs to the IL-6 superfamily.

Its subcellular location is the secreted. In terms of biological role, hematopoietic growth factor that stimulates the proliferation and colony formation of normal and transformed avian cells of the myeloid lineage. The protein is Myelomonocytic growth factor of Gallus gallus (Chicken).